Reading from the N-terminus, the 346-residue chain is Phosphate acyltransferase (346 aa).

The protein belongs to the PlsX family. Homodimer. Probably interacts with PlsY.

It localises to the cytoplasm. It carries out the reaction a fatty acyl-[ACP] + phosphate = an acyl phosphate + holo-[ACP]. The protein operates within lipid metabolism; phospholipid metabolism. Its function is as follows. Catalyzes the reversible formation of acyl-phosphate (acyl-PO(4)) from acyl-[acyl-carrier-protein] (acyl-ACP). This enzyme utilizes acyl-ACP as fatty acyl donor, but not acyl-CoA. The sequence is that of Phosphate acyltransferase from Brucella ovis (strain ATCC 25840 / 63/290 / NCTC 10512).